Here is a 277-residue protein sequence, read N- to C-terminus: Energy-coupling factor transporter ATP-binding protein EcfA1 (277 aa).

One can recognise an ABC transporter domain in the interval 5–243 (IRAQNVSFCY…VEVLKKIGLD (239 aa)). Residue 42-49 (GHNGSGKS) coordinates ATP.

This sequence belongs to the ABC transporter superfamily. Energy-coupling factor EcfA family. As to quaternary structure, forms a stable energy-coupling factor (ECF) transporter complex composed of 2 membrane-embedded substrate-binding proteins (S component), 2 ATP-binding proteins (A component) and 2 transmembrane proteins (T component).

It is found in the cell membrane. ATP-binding (A) component of a common energy-coupling factor (ECF) ABC-transporter complex. Unlike classic ABC transporters this ECF transporter provides the energy necessary to transport a number of different substrates. The sequence is that of Energy-coupling factor transporter ATP-binding protein EcfA1 from Caldanaerobacter subterraneus subsp. tengcongensis (strain DSM 15242 / JCM 11007 / NBRC 100824 / MB4) (Thermoanaerobacter tengcongensis).